A 255-amino-acid polypeptide reads, in one-letter code: Hemin import ATP-binding protein HmuV (255 aa).

The region spanning 2–238 is the ABC transporter domain; the sequence is LQVEGLYLCR…AALKAVYGID (237 aa). ATP is bound at residue 34–41; the sequence is GPNGAGKS.

The protein belongs to the ABC transporter superfamily. Heme (hemin) importer (TC 3.A.1.14.5) family. In terms of assembly, the complex is composed of two ATP-binding proteins (HmuV), two transmembrane proteins (HmuU) and a solute-binding protein (HmuT).

Its subcellular location is the cell inner membrane. Functionally, part of the ABC transporter complex HmuTUV involved in hemin import. Responsible for energy coupling to the transport system. The polypeptide is Hemin import ATP-binding protein HmuV (Pseudomonas putida (strain ATCC 47054 / DSM 6125 / CFBP 8728 / NCIMB 11950 / KT2440)).